The chain runs to 366 residues: MNKVILYCRQGFEKECAAEITDKAAQQGVFGFARVKENSAYVIFECYQPDDADKLARELPFSSLIFARQMFVAGELLQDLPPEDRVTPVVGMLQGVVEKGGELRVEVADTNESKELMKFCRKFTVPLRTALRDAKILANFETPKRPVVHVFFIAPGCCYTGYSYTNNNSPFYMGIPRLKFPADAPSRSTLKLEEAFHVFIPADEWDERLANGMYAVDLGACPGGWTYQLVKRNMWVASVDNGPMAQSLMDTGQVTWLREDGFKYRPTRTNITWMVCDMVEKPAKVAALMAQWLVNGWCRETIFNLKLPMKKRYEEVSQNIASIQAQLDEHGINAQIQARQLYHDREEVTVHVRRWWAAVGGRRDER.

Residues S188, C221–G224, D240, D260, and D277 each bind S-adenosyl-L-methionine. K306 serves as the catalytic Proton acceptor.

Belongs to the class I-like SAM-binding methyltransferase superfamily. RNA methyltransferase RlmE family. RlmM subfamily. In terms of assembly, monomer.

Its subcellular location is the cytoplasm. The catalysed reaction is cytidine(2498) in 23S rRNA + S-adenosyl-L-methionine = 2'-O-methylcytidine(2498) in 23S rRNA + S-adenosyl-L-homocysteine + H(+). Functionally, catalyzes the 2'-O-methylation at nucleotide C2498 in 23S rRNA. In Cronobacter sakazakii (strain ATCC BAA-894) (Enterobacter sakazakii), this protein is Ribosomal RNA large subunit methyltransferase M.